Reading from the N-terminus, the 606-residue chain is MACPF domain-containing protein At4g24290 (606 aa).

In terms of domain architecture, MACPF spans 1-332; the sequence is MALRLPASKA…PPIEELHQFL (332 aa).

This sequence belongs to the complement C6/C7/C8/C9 (TC 1.C.39) family.

Its function is as follows. Negatively controls the salicylic acid (SA)-mediated pathway of programmed cell death in plant immunity. This is MACPF domain-containing protein At4g24290 from Arabidopsis thaliana (Mouse-ear cress).